The following is a 204-amino-acid chain: Guanylate kinase (204 aa).

Residues glycine 5–glutamate 184 form the Guanylate kinase-like domain. Glycine 12 to glycine 19 is an ATP binding site.

Belongs to the guanylate kinase family.

The protein resides in the cytoplasm. The catalysed reaction is GMP + ATP = GDP + ADP. Essential for recycling GMP and indirectly, cGMP. This is Guanylate kinase from Lactobacillus johnsonii (strain CNCM I-12250 / La1 / NCC 533).